Here is a 312-residue protein sequence, read N- to C-terminus: Ribosomal protein L11 methyltransferase (312 aa).

S-adenosyl-L-methionine contacts are provided by T160, G181, D203, and N246.

The protein belongs to the methyltransferase superfamily. PrmA family.

It localises to the cytoplasm. It catalyses the reaction L-lysyl-[protein] + 3 S-adenosyl-L-methionine = N(6),N(6),N(6)-trimethyl-L-lysyl-[protein] + 3 S-adenosyl-L-homocysteine + 3 H(+). Methylates ribosomal protein L11. The protein is Ribosomal protein L11 methyltransferase of Staphylococcus saprophyticus subsp. saprophyticus (strain ATCC 15305 / DSM 20229 / NCIMB 8711 / NCTC 7292 / S-41).